A 589-amino-acid chain; its full sequence is MAAHNLCFNSAFVCNVHHQKTQHFPCNAVSKTTSTHAVTFHRRSANYRPPLWDHQYLLSLENIYVKEVETAEKAILFKEEVRKTLNEIEGSIEQLEMIDSLQRLGISYHYKHEIHDILRKIHDQHGEIERETQDLHATSLEFILLRQHGFDVSQDAFDVFISETGEFRKTLHSDIKGLLSLYEASYFSMDSEFKLKETRIYANKRLSEFVAESSKTICREDETYILEMVKRALETPYHWSIRRLEARWYINVYEKKHEMNPLLLEFAAIDFNMLQANHQEELKLISSWWNSTGLMKQLDFVRDRITESYFWTIGIFYEPEFKYCRKILTKIFMLIVIMDDIYDIYGTLEELELFTNVVEKWDVNHVERLPNYMRMCFLFLYNEINQIGYDVLRDKGLNVIPYLKQVWTDLFKTFLTESKWYKTGHKPSFEEYMQNGVISSSVPTILLHLFSVLSDHISDQTLTDDSKNHSVVRSCATILRLANDLATSTEEMARGDSPKSVQCYMYETRASEEEARRHMQSMISDSWDIINSDLKTAHTSSLPRGFLAAAANLNRVVQCIYRHGDGHGSPEKTKTVDYIQSVLFNPVPL.

A chloroplast-targeting transit peptide spans 1–25 (MAAHNLCFNSAFVCNVHHQKTQHFP). (2E,6E)-farnesyl diphosphate contacts are provided by Arg-302, Asp-339, Asp-343, Arg-480, and Asn-483. Mg(2+) is bound by residues Asp-339 and Asp-343. Residues 339-343 (DDIYD) carry the DDXXD motif motif. Residues Asn-483, Thr-487, and Glu-491 each contribute to the Mg(2+) site.

Belongs to the terpene synthase family. Tpsb subfamily. It depends on Mg(2+) as a cofactor. The cofactor is Mn(2+). As to expression, expressed exclusively in flowers.

The protein resides in the plastid. It localises to the chloroplast. The catalysed reaction is (2E,6E)-farnesyl diphosphate = (3E,6E)-alpha-farnesene + diphosphate. The protein operates within secondary metabolite biosynthesis; terpenoid biosynthesis. Functionally, predominantly involved in monoterpene (C10) biosynthesis. Using GPP as substrate, the major product is (E)-beta-ocimene with minor amounts of (Z)-beta-ocimene and myrcene. Using FPP as substrate, could also be able to synthesize in vitro sesquiterpenes (C15) with (E,E)-alpha-farnesene as the major product and with (Z,E)-alpha-farnesene and (E,E)-beta-farnesene as minor products. This Arabidopsis thaliana (Mouse-ear cress) protein is (E)-beta-ocimene synthase, chloroplastic (TPS02).